The chain runs to 114 residues: MICOS complex subunit MIC12 (114 aa).

A helical membrane pass occupies residues 4–26 (IAKLGSFTLVSGVVATSCYYYFI).

The protein belongs to the MICOS complex subunit Mic12 family. As to quaternary structure, component of the mitochondrial contact site and cristae organizing system (MICOS) complex.

The protein resides in the mitochondrion inner membrane. Functionally, component of the MICOS complex, a large protein complex of the mitochondrial inner membrane that plays crucial roles in the maintenance of crista junctions, inner membrane architecture, and formation of contact sites to the outer membrane. This chain is MICOS complex subunit MIC12 (AIM5), found in Candida glabrata (strain ATCC 2001 / BCRC 20586 / JCM 3761 / NBRC 0622 / NRRL Y-65 / CBS 138) (Yeast).